Consider the following 346-residue polypeptide: Methylthioribose-1-phosphate isomerase (346 aa).

Substrate-binding positions include 46-48 (RGA), R89, and Q196. The active-site Proton donor is D237. 247–248 (NK) provides a ligand contact to substrate.

Belongs to the eIF-2B alpha/beta/delta subunits family. MtnA subfamily.

It catalyses the reaction 5-(methylsulfanyl)-alpha-D-ribose 1-phosphate = 5-(methylsulfanyl)-D-ribulose 1-phosphate. Its pathway is amino-acid biosynthesis; L-methionine biosynthesis via salvage pathway; L-methionine from S-methyl-5-thio-alpha-D-ribose 1-phosphate: step 1/6. Functionally, catalyzes the interconversion of methylthioribose-1-phosphate (MTR-1-P) into methylthioribulose-1-phosphate (MTRu-1-P). This is Methylthioribose-1-phosphate isomerase from Geotalea daltonii (strain DSM 22248 / JCM 15807 / FRC-32) (Geobacter daltonii).